The chain runs to 263 residues: 4-hydroxy-tetrahydrodipicolinate reductase (263 aa).

Residues 7 to 12 (GFKGRM), 96 to 98 (GTT), and 122 to 125 (APNF) each bind NAD(+). The Proton donor/acceptor role is filled by His-152. His-153 is a binding site for (S)-2,3,4,5-tetrahydrodipicolinate. The Proton donor role is filled by Lys-156. Residue 162-163 (GT) coordinates (S)-2,3,4,5-tetrahydrodipicolinate.

Belongs to the DapB family.

The protein resides in the cytoplasm. The catalysed reaction is (S)-2,3,4,5-tetrahydrodipicolinate + NAD(+) + H2O = (2S,4S)-4-hydroxy-2,3,4,5-tetrahydrodipicolinate + NADH + H(+). It catalyses the reaction (S)-2,3,4,5-tetrahydrodipicolinate + NADP(+) + H2O = (2S,4S)-4-hydroxy-2,3,4,5-tetrahydrodipicolinate + NADPH + H(+). Its pathway is amino-acid biosynthesis; L-lysine biosynthesis via DAP pathway; (S)-tetrahydrodipicolinate from L-aspartate: step 4/4. Catalyzes the conversion of 4-hydroxy-tetrahydrodipicolinate (HTPA) to tetrahydrodipicolinate. The chain is 4-hydroxy-tetrahydrodipicolinate reductase from Listeria monocytogenes serotype 4b (strain CLIP80459).